A 586-amino-acid polypeptide reads, in one-letter code: Pyruvate kinase (586 aa).

A substrate-binding site is contributed by R32. N34, S36, D66, and T67 together coordinate K(+). 34-37 (NFSH) is an ATP binding site. Positions 73 and 156 each coordinate ATP. E222 contributes to the Mg(2+) binding site. 3 residues coordinate substrate: G245, D246, and T278. D246 is a binding site for Mg(2+).

The protein belongs to the pyruvate kinase family. In the C-terminal section; belongs to the PEP-utilizing enzyme family. Requires Mg(2+) as cofactor. K(+) serves as cofactor.

It carries out the reaction pyruvate + ATP = phosphoenolpyruvate + ADP + H(+). The protein operates within carbohydrate degradation; glycolysis; pyruvate from D-glyceraldehyde 3-phosphate: step 5/5. This chain is Pyruvate kinase (pyk), found in Staphylococcus haemolyticus (strain JCSC1435).